A 366-amino-acid polypeptide reads, in one-letter code: Methylthioribose-1-phosphate isomerase (366 aa).

Asp260 serves as the catalytic Proton donor.

It belongs to the eIF-2B alpha/beta/delta subunits family. MtnA subfamily.

It localises to the cytoplasm. The protein localises to the nucleus. The catalysed reaction is 5-(methylsulfanyl)-alpha-D-ribose 1-phosphate = 5-(methylsulfanyl)-D-ribulose 1-phosphate. It participates in amino-acid biosynthesis; L-methionine biosynthesis via salvage pathway; L-methionine from S-methyl-5-thio-alpha-D-ribose 1-phosphate: step 1/6. Its function is as follows. Catalyzes the interconversion of methylthioribose-1-phosphate (MTR-1-P) into methylthioribulose-1-phosphate (MTRu-1-P). The chain is Methylthioribose-1-phosphate isomerase from Caenorhabditis briggsae.